The sequence spans 478 residues: Putative multidrug resistance outer membrane protein MdtQ (478 aa).

The first 21 residues, 1-21 (MNRDSFYPAIACFPLLLMLAG), serve as a signal peptide directing secretion. A lipid anchor (N-palmitoyl cysteine) is attached at Cys22. Cys22 carries S-diacylglycerol cysteine lipidation.

This sequence belongs to the outer membrane factor (OMF) (TC 1.B.17) family.

Its subcellular location is the cell outer membrane. In terms of biological role, could be involved in resistance to puromycin, acriflavine and tetraphenylarsonium chloride. The sequence is that of Putative multidrug resistance outer membrane protein MdtQ (mdtQ) from Escherichia coli (strain K12).